A 335-amino-acid chain; its full sequence is Trans-3-hydroxy-L-proline dehydratase (335 aa).

Catalysis depends on Cys-91, which acts as the Proton acceptor. Residues 92–93 (GH) and 256–257 (GS) contribute to the substrate site.

The protein belongs to the proline racemase family. As to quaternary structure, homodimer.

The catalysed reaction is trans-3-hydroxy-L-proline = 1-pyrroline-2-carboxylate + H2O. It participates in amino-acid degradation. In terms of biological role, catalyzes the dehydration of trans-3-hydroxy-L-proline (t3LHyp) to Delta(1)-pyrroline-2-carboxylate (Pyr2C). Together with LhpI, is involved in a t3LHyp degradation pathway to L-proline, which allows A.brasilense to grow on t3LHyp as a sole carbon source. This is Trans-3-hydroxy-L-proline dehydratase from Azospirillum brasilense.